We begin with the raw amino-acid sequence, 326 residues long: Melanocortin receptor 4 (326 aa).

Over residues 1 to 14 (MNTSHHHGLHHSFR) the composition is skewed to basic residues. A disordered region spans residues 1-31 (MNTSHHHGLHHSFRNHSQGALPVGKPSHGDR). Residues 1–46 (MNTSHHHGLHHSFRNHSQGALPVGKPSHGDRGSASGCYEQLLISTE) are Extracellular-facing. N-linked (GlcNAc...) asparagine glycosylation is found at Asn2 and Asn15. The chain crosses the membrane as a helical span at residues 47-67 (IFLTLGLVSLLENILVIAAIV). The Cytoplasmic portion of the chain corresponds to 68-71 (KNKN). The chain crosses the membrane as a helical span at residues 72 to 92 (LHSPMYFFICSLAVADLLVSV). The Extracellular segment spans residues 93 to 121 (SNASETVVMALITGGNLTNRESIIKNMDN). 2 N-linked (GlcNAc...) asparagine glycosylation sites follow: Asn94 and Asn108. The chain crosses the membrane as a helical span at residues 122–142 (VFDSMICSSLLASIWSLLAIA). Residues 143-163 (VDRYITIFYALRYHNIMTQRR) are Cytoplasmic-facing. The helical transmembrane segment at 164-184 (AGTIITCIWTFCTVSGVLFIV) threads the bilayer. Residues 185–190 (YSESTT) lie on the Extracellular side of the membrane. A helical transmembrane segment spans residues 191 to 211 (VLICLISMFFTMLALMASLYV). The Cytoplasmic segment spans residues 212–246 (HMFLLARLHMKRIAALPGNGPIWQAANMKGAITIT). A helical membrane pass occupies residues 247 to 267 (ILLGVFVVCWAPFFLHLILMI). The Extracellular portion of the chain corresponds to 268-281 (SCPRNPYCVCFMSH). The chain crosses the membrane as a helical span at residues 282–302 (FNMYLILIMCNSVIDPLIYAF). The Cytoplasmic segment spans residues 303-326 (RSQEMRKTFKEICCCWYGLASLCV). Cys316 carries S-palmitoyl cysteine lipidation.

Belongs to the G-protein coupled receptor 1 family. In terms of assembly, homodimer; disulfide-linked, also forms higher order oligomers. Interacts with mrap2a; decreasing ligand-sensitivity. Interacts with mrap2b; increasing ligand-sensitivity and generation of cAMP.

The protein localises to the cell membrane. In terms of biological role, receptor specific to the heptapeptide core common to adrenocorticotropic hormone and alpha-, beta-, and gamma-MSH. Plays a central role in energy homeostasis and somatic growth. This receptor is mediated by G proteins that stimulate adenylate cyclase (cAMP). This chain is Melanocortin receptor 4 (mc4r), found in Danio rerio (Zebrafish).